A 222-amino-acid chain; its full sequence is N-(5'-phosphoribosyl)anthranilate isomerase (222 aa).

This sequence belongs to the TrpF family.

It carries out the reaction N-(5-phospho-beta-D-ribosyl)anthranilate = 1-(2-carboxyphenylamino)-1-deoxy-D-ribulose 5-phosphate. Its pathway is amino-acid biosynthesis; L-tryptophan biosynthesis; L-tryptophan from chorismate: step 3/5. This Rhizobium rhizogenes (strain K84 / ATCC BAA-868) (Agrobacterium radiobacter) protein is N-(5'-phosphoribosyl)anthranilate isomerase.